Here is a 778-residue protein sequence, read N- to C-terminus: Mitochondrial intermediate peptidase (778 aa).

The transit peptide at methionine 1–threonine 37 directs the protein to the mitochondrion. Histidine 557 lines the Zn(2+) pocket. Glutamate 558 is an active-site residue. Zn(2+)-binding residues include histidine 561 and histidine 564.

It belongs to the peptidase M3 family. The cofactor is Zn(2+).

It localises to the mitochondrion matrix. It catalyses the reaction Release of an N-terminal octapeptide as second stage of processing of some proteins imported into the mitochondrion.. Cleaves proteins, imported into the mitochondrion, to their mature size. While most mitochondrial precursor proteins are processed to the mature form in one step by mitochondrial processing peptidase (MPP), the sequential cleavage by MIP of an octapeptide after initial processing by MPP is a required step for a subgroup of nuclear-encoded precursor proteins destined for the matrix or the inner membrane. This Chaetomium globosum (strain ATCC 6205 / CBS 148.51 / DSM 1962 / NBRC 6347 / NRRL 1970) (Soil fungus) protein is Mitochondrial intermediate peptidase (OCT1).